Reading from the N-terminus, the 318-residue chain is Methionyl-tRNA formyltransferase (318 aa).

Residue 112-115 (SILP) participates in (6S)-5,6,7,8-tetrahydrofolate binding.

This sequence belongs to the Fmt family.

It carries out the reaction L-methionyl-tRNA(fMet) + (6R)-10-formyltetrahydrofolate = N-formyl-L-methionyl-tRNA(fMet) + (6S)-5,6,7,8-tetrahydrofolate + H(+). Attaches a formyl group to the free amino group of methionyl-tRNA(fMet). The formyl group appears to play a dual role in the initiator identity of N-formylmethionyl-tRNA by promoting its recognition by IF2 and preventing the misappropriation of this tRNA by the elongation apparatus. This chain is Methionyl-tRNA formyltransferase, found in Haemophilus influenzae (strain PittGG).